The chain runs to 292 residues: Protein-L-isoaspartate O-methyltransferase (292 aa).

A disordered region spans residues Met-1–Ala-76. The span at Asn-28–Gln-48 shows a compositional bias: polar residues. The active site involves Ser-138.

The protein belongs to the methyltransferase superfamily. L-isoaspartyl/D-aspartyl protein methyltransferase family.

It localises to the cytoplasm. It catalyses the reaction [protein]-L-isoaspartate + S-adenosyl-L-methionine = [protein]-L-isoaspartate alpha-methyl ester + S-adenosyl-L-homocysteine. Its function is as follows. Catalyzes the methyl esterification of L-isoaspartyl residues in peptides and proteins that result from spontaneous decomposition of normal L-aspartyl and L-asparaginyl residues. It plays a role in the repair and/or degradation of damaged proteins. The polypeptide is Protein-L-isoaspartate O-methyltransferase (Janthinobacterium sp. (strain Marseille) (Minibacterium massiliensis)).